The following is a 362-amino-acid chain: Heme A synthase (362 aa).

5 consecutive transmembrane segments (helical) span residues 12 to 32 (AVRI…LVGG), 102 to 122 (VIGA…DLGG), 128 to 148 (LWII…MVAS), 159 to 179 (VRLA…VWTL), and 198 to 218 (AAVL…VAGL). Histidine 262 serves as a coordination point for heme. Transmembrane regions (helical) follow at residues 264–281 (MLAY…IDAW), 289–309 (GALA…VTLL), and 312–332 (VPIG…TLAV). Residue histidine 320 participates in heme binding.

This sequence belongs to the COX15/CtaA family. Type 2 subfamily. In terms of assembly, interacts with CtaB. Requires heme b as cofactor.

It localises to the cell membrane. It catalyses the reaction Fe(II)-heme o + 2 A + H2O = Fe(II)-heme a + 2 AH2. It participates in porphyrin-containing compound metabolism; heme A biosynthesis; heme A from heme O: step 1/1. Catalyzes the conversion of heme O to heme A by two successive hydroxylations of the methyl group at C8. The first hydroxylation forms heme I, the second hydroxylation results in an unstable dihydroxymethyl group, which spontaneously dehydrates, resulting in the formyl group of heme A. The protein is Heme A synthase of Rhodopseudomonas palustris (strain BisB18).